We begin with the raw amino-acid sequence, 135 residues long: MRLAFLLLAVSHFICGNALPTNVKSSPVVSPGLIQSFDNAQKPVVMSRKLLRTDERLSEANEERTKLSELFRLDDDEVAAIKELSSMFSAFLQKKSQAFDVYDEIFRSGYPIDTAARISNLYTKYLKDPQAFRGP.

An N-terminal signal peptide occupies residues 1–18 (MRLAFLLLAVSHFICGNA). The short motif at 48 to 64 (RKLLRTDERLSEANEER) is the RxLR-dEER element. The tract at residues 126–135 (LKDPQAFRGP) is NRL1-binding domain.

The protein belongs to the RxLR effector family. Interacts with host ubiquitin E3 ligase NRL1.

It is found in the secreted. The protein localises to the host cytoplasm. Its subcellular location is the host nucleus. It localises to the host nucleoplasm. Effector that promotes P.infestans virulence and suppresses pattern-triggered immunity (PTI). Interacts with the host ubiquitin E3 ligase NRL1 and enhances the association between NRL1 and SWAP70 to promote proteasome-mediated degradation of SWAP70, which results in the suppression of immunity. This is RxLR effector protein PITG_02860 from Phytophthora infestans (strain T30-4) (Potato late blight agent).